A 453-amino-acid chain; its full sequence is UDP-N-acetylmuramate--L-alanine ligase (453 aa).

Residue 112–118 coordinates ATP; sequence GTHGKTT.

The protein belongs to the MurCDEF family.

It is found in the cytoplasm. The enzyme catalyses UDP-N-acetyl-alpha-D-muramate + L-alanine + ATP = UDP-N-acetyl-alpha-D-muramoyl-L-alanine + ADP + phosphate + H(+). Its pathway is cell wall biogenesis; peptidoglycan biosynthesis. In terms of biological role, cell wall formation. This is UDP-N-acetylmuramate--L-alanine ligase from Lawsonia intracellularis (strain PHE/MN1-00).